The primary structure comprises 189 residues: Small ribosomal subunit protein uS5 (189 aa).

Residues 22-85 (FVDKLVAINR…EAAKRDLIFV (64 aa)) enclose the S5 DRBM domain.

It belongs to the universal ribosomal protein uS5 family. As to quaternary structure, part of the 30S ribosomal subunit. Contacts proteins S4 and S8.

In terms of biological role, with S4 and S12 plays an important role in translational accuracy. Its function is as follows. Located at the back of the 30S subunit body where it stabilizes the conformation of the head with respect to the body. This is Small ribosomal subunit protein uS5 from Sinorhizobium fredii (strain NBRC 101917 / NGR234).